The sequence spans 474 residues: Iroquois-class homeodomain protein irx-5 (474 aa).

The segment at residues 109–171 is a DNA-binding region (homeobox; TALE-type); it reads DPAYRKNASR…NARRRLKKEN (63 aa). Disordered stretches follow at residues 174–222, 252–294, and 453–474; these read TWTP…SPDG, ERNG…IQQL, and SQSQDDLNKGTPYEMKKGMSSI. The span at 182 to 199 shows a compositional bias: acidic residues; that stretch reads EDEDDDENIDLEKNEEDD. Pro residues predominate over residues 263 to 273; the sequence is PPTPPLCPPDQ.

The protein belongs to the TALE/IRO homeobox family. As to expression, early in gastrulation, expressed in cells beneath the blastopore lip. Subsequently expressed in the neural plate in overlapping patterns with other irx members, which all share an anterior border of expression. At the time of neural tube closure (stage 19) in regions of the midbrain, hindbrain, neural tube and optic vesicle, where expression continues during tailbud stages. In stage 34, expressed throughout the eye retina. Does not appear to be expressed in the developing heart or pronephros.

The protein localises to the nucleus. In terms of biological role, acts partially redundantly with other irx members in neural patterning. Required for formation of the posterior forebrain, midbrain, hindbrain, and to a lesser extent, spinal cord. Patterns the neuroectoderm in both the anterior/posterior and dorsal/ventral axes. Does not appear to play a role in pronephros kidney development. Involved in craniofacial and gonadal development. Modulates the migration of progenitor cell populations in branchial arches and gonads by repressing CXCL12. The protein is Iroquois-class homeodomain protein irx-5 (irx5) of Xenopus laevis (African clawed frog).